The primary structure comprises 459 residues: Argininosuccinate lyase (459 aa).

The protein belongs to the lyase 1 family. Argininosuccinate lyase subfamily.

The protein resides in the cytoplasm. The enzyme catalyses 2-(N(omega)-L-arginino)succinate = fumarate + L-arginine. It participates in amino-acid biosynthesis; L-arginine biosynthesis; L-arginine from L-ornithine and carbamoyl phosphate: step 3/3. This chain is Argininosuccinate lyase, found in Staphylococcus aureus (strain MSSA476).